Here is a 383-residue protein sequence, read N- to C-terminus: Na(+)/H(+) antiporter NhaA (383 aa).

A run of 11 helical transmembrane segments spans residues A14 to L34, F47 to I67, I87 to F107, G117 to G137, V146 to F166, L171 to A191, A205 to I225, V252 to V272, M280 to F300, I321 to L341, and L356 to S376.

It belongs to the NhaA Na(+)/H(+) (TC 2.A.33) antiporter family.

The protein resides in the cell inner membrane. The catalysed reaction is Na(+)(in) + 2 H(+)(out) = Na(+)(out) + 2 H(+)(in). It carries out the reaction Li(+)(in) + 2 H(+)(out) = Li(+)(out) + 2 H(+)(in). Its activity is regulated as follows. Activity is regulated by pH. Active at alkaline pH. Amiloride strongly reduces affinity for Na(+), but does not change the Vmax. Its function is as follows. Na(+)/H(+) antiporter that extrudes sodium in exchange for external protons. Can also transport lithium and potassium. In Vibrio parahaemolyticus serotype O3:K6 (strain RIMD 2210633), this protein is Na(+)/H(+) antiporter NhaA.